We begin with the raw amino-acid sequence, 384 residues long: tRNA-dihydrouridine(20) synthase [NAD(P)+] (384 aa).

FMN-binding positions include 12 to 14 (PMV) and Gln88. The active-site Proton donor is Cys117. FMN-binding positions include Lys160, His188, 222-224 (NGA), and 249-250 (AE). The segment at 359 to 384 (KQKRKQTDHIGSDTKKQKVVPLPTDI) is disordered. The segment covering 363–374 (KQTDHIGSDTKK) has biased composition (basic and acidic residues).

This sequence belongs to the Dus family. Dus2 subfamily. In terms of assembly, monomer. FMN serves as cofactor. In terms of processing, N-glycosylated.

The protein resides in the cytoplasm. It is found in the nucleus. It carries out the reaction 5,6-dihydrouridine(20) in tRNA + NADP(+) = uridine(20) in tRNA + NADPH + H(+). The enzyme catalyses 5,6-dihydrouridine(20) in tRNA + NAD(+) = uridine(20) in tRNA + NADH + H(+). It catalyses the reaction a 5,6-dihydrouridine in mRNA + NAD(+) = a uridine in mRNA + NADH + H(+). The catalysed reaction is a 5,6-dihydrouridine in mRNA + NADP(+) = a uridine in mRNA + NADPH + H(+). Catalyzes the NADPH-dependent synthesis of dihydrouridine, a modified base found in the D-loop of most tRNAs. Specifically modifies U20 in cytoplasmic tRNAs. Also able to mediate dihydrouridylation of some mRNAs, thereby affecting their translation. This is tRNA-dihydrouridine(20) synthase [NAD(P)+] (SMM1) from Saccharomyces cerevisiae (strain ATCC 204508 / S288c) (Baker's yeast).